Consider the following 558-residue polypeptide: Factor VII-activating protease (558 aa).

Positions 1-23 are cleaved as a signal peptide; sequence MSVVMLVFRVLLLIALVGNSAIG. 3 consecutive EGF-like domains span residues 71–107, 109–146, and 148–186; these read DDDP…SRCQ, VQNK…PDCS, and VLPV…RFCE. Cystine bridges form between C75–C86, C80–C95, C97–C106, C113–C123, C118–C134, C136–C145, C152–C163, C157–C174, C176–C185, C192–C274, C213–C255, C244–C269, C299–C433, C345–C361, C353–C422, C445–C513, C475–C491, and C503–C531. In terms of domain architecture, Kringle spans 191-274; the sequence is DCYVGDGYSY…KWEYCNVEVC (84 aa). The Peptidase S1 domain maps to 312 to 553; sequence IYGGFKSTAG…FLNWIKTTMH (242 aa). Catalysis depends on charge relay system residues H360 and D409. Catalysis depends on S507, which acts as the Charge relay system.

The protein belongs to the peptidase S1 family. As to quaternary structure, heterodimer; disulfide-linked. Heterodimer of a 50 kDa heavy and a 27 kDa light chain linked by a disulfide bond. Post-translationally, proteolytic cleavage at Gly-23 or Met-27 can give rise to the 50 kDa heavy chain (HC) and cleavage at Arg-311 or Lys-317 can give rise to the 27 kDa light chain (LC). The HC can undergo further proteolytic cleavage giving rise to a 26 kDa fragment. The LC can undergo further proteolytic cleavage at Arg-311 leading to a 17-kDa fragment and at Arg-478 leading to a 8-kDa fragment.

It localises to the secreted. Its function is as follows. Cleaves the alpha-chain at multiple sites and the beta-chain between 'Lys-53' and 'Lys-54' but not the gamma-chain of fibrinogen and therefore does not initiate the formation of the fibrin clot and does not cause the fibrinolysis directly. It does not cleave (activate) prothrombin and plasminogen but converts the inactive single chain urinary plasminogen activator (pro-urokinase) to the active two chain form. Activates coagulation factor VII. May function as a tumor suppressor negatively regulating cell proliferation and cell migration. The sequence is that of Factor VII-activating protease from Rattus norvegicus (Rat).